The following is a 393-amino-acid chain: GDSL esterase/lipase At1g28600 (393 aa).

Residues 1–22 form the signal peptide; it reads MASLDSLVIFLFSTLFVTIVSS. Residue Ser-38 is the Nucleophile of the active site. Residues Asn-133 and Asn-317 are each glycosylated (N-linked (GlcNAc...) asparagine). Active-site residues include Asp-340 and His-343. An N-linked (GlcNAc...) asparagine glycan is attached at Asn-382.

The protein belongs to the 'GDSL' lipolytic enzyme family.

It is found in the secreted. The polypeptide is GDSL esterase/lipase At1g28600 (Arabidopsis thaliana (Mouse-ear cress)).